The sequence spans 100 residues: Urease subunit gamma (100 aa).

It belongs to the urease gamma subunit family. As to quaternary structure, heterotrimer of UreA (gamma), UreB (beta) and UreC (alpha) subunits. Three heterotrimers associate to form the active enzyme.

It localises to the cytoplasm. It catalyses the reaction urea + 2 H2O + H(+) = hydrogencarbonate + 2 NH4(+). The protein operates within nitrogen metabolism; urea degradation; CO(2) and NH(3) from urea (urease route): step 1/1. This chain is Urease subunit gamma, found in Mycobacterium sp. (strain JLS).